The following is a 195-amino-acid chain: MRVAQVVRNTSETQISVKIDLDGTGRQKLATGVPFLDHMLDQIARHGLVDLDIEAHGDTHIDDHHTVEDVGITLGQAVAKAVGDRKGIRRYGHSYVPLDEALSRVVIDFSGRPGLEFHVPFTRARIGTFDVDLSIEFFRGFVNHAGVTLHIDNLRGVNAHHQLETVFKAFGRALRMAVELDERAAGQIPSTKGSL.

The protein belongs to the imidazoleglycerol-phosphate dehydratase family.

The protein resides in the cytoplasm. The enzyme catalyses D-erythro-1-(imidazol-4-yl)glycerol 3-phosphate = 3-(imidazol-4-yl)-2-oxopropyl phosphate + H2O. Its pathway is amino-acid biosynthesis; L-histidine biosynthesis; L-histidine from 5-phospho-alpha-D-ribose 1-diphosphate: step 6/9. This is Imidazoleglycerol-phosphate dehydratase from Burkholderia mallei (strain NCTC 10247).